The sequence spans 458 residues: Bifunctional protein HldE (458 aa).

Residues 1 to 311 are ribokinase; that stretch reads MVNVLVVGDL…ENLKSKKSGF (311 aa). 189-192 is an ATP binding site; the sequence is NKKE. Aspartate 257 is an active-site residue. The cytidylyltransferase stretch occupies residues 333-458; that stretch reads FTNGCFDILH…TTNIINKIKG (126 aa).

The protein in the N-terminal section; belongs to the carbohydrate kinase PfkB family. In the C-terminal section; belongs to the cytidylyltransferase family. As to quaternary structure, homodimer.

It catalyses the reaction D-glycero-beta-D-manno-heptose 7-phosphate + ATP = D-glycero-beta-D-manno-heptose 1,7-bisphosphate + ADP + H(+). The catalysed reaction is D-glycero-beta-D-manno-heptose 1-phosphate + ATP + H(+) = ADP-D-glycero-beta-D-manno-heptose + diphosphate. It participates in nucleotide-sugar biosynthesis; ADP-L-glycero-beta-D-manno-heptose biosynthesis; ADP-L-glycero-beta-D-manno-heptose from D-glycero-beta-D-manno-heptose 7-phosphate: step 1/4. It functions in the pathway nucleotide-sugar biosynthesis; ADP-L-glycero-beta-D-manno-heptose biosynthesis; ADP-L-glycero-beta-D-manno-heptose from D-glycero-beta-D-manno-heptose 7-phosphate: step 3/4. Functionally, catalyzes the phosphorylation of D-glycero-D-manno-heptose 7-phosphate at the C-1 position to selectively form D-glycero-beta-D-manno-heptose-1,7-bisphosphate. Catalyzes the ADP transfer from ATP to D-glycero-beta-D-manno-heptose 1-phosphate, yielding ADP-D-glycero-beta-D-manno-heptose. This chain is Bifunctional protein HldE, found in Campylobacter fetus subsp. fetus (strain 82-40).